We begin with the raw amino-acid sequence, 1357 residues long: Kinectin (1357 aa).

The Cytoplasmic segment spans residues 1–6; sequence MEFYES. A helical; Signal-anchor for type II membrane protein membrane pass occupies residues 7-29; sequence AYFIVLIPSIVITVIFLFFWLFM. At 30 to 1357 the chain is on the lumenal side; sequence KETLYDEVLA…KEKEHYQVLE (1328 aa). Disordered regions lie at residues 48–81 and 103–218; these read IPTK…ESVP and NVVE…KQKT. Ser-75 carries the post-translational modification Phosphoserine; by FAM20C. Ser-77 bears the Phosphoserine mark. Basic and acidic residues predominate over residues 121-135; that stretch reads QKPVLEEQVIKESDA. Thr-153 bears the Phosphothreonine mark. Ser-156 carries the phosphoserine modification. Positions 161–171 are enriched in basic residues; it reads SKKKPGQKKSK. N-linked (GlcNAc...) asparagine glycans are attached at residues Asn-172, Asn-435, Asn-772, Asn-904, and Asn-1055. The segment covering 172 to 182 has biased composition (basic and acidic residues); it reads NGSDDQDKKVE. Residues 330-1356 are a coiled coil; sequence LIHQLQEKDK…TKEKEHYQVL (1027 aa). Ser-1084 bears the Phosphoserine mark. Residues Asn-1088 and Asn-1263 are each glycosylated (N-linked (GlcNAc...) asparagine). Ser-1313 is subject to Phosphoserine. A glycan (N-linked (GlcNAc...) asparagine) is linked at Asn-1329.

The protein belongs to the kinectin family. As to quaternary structure, parallel homodimers formed between the membrane-bound and the cytosolic form, and also between 2 cytosolic forms. High levels in peripheral blood lymphocytes, testis and ovary, lower levels in spleen, thymus, prostate, small intestine and colon.

Its subcellular location is the endoplasmic reticulum membrane. Functionally, receptor for kinesin thus involved in kinesin-driven vesicle motility. Accumulates in integrin-based adhesion complexes (IAC) upon integrin aggregation by fibronectin. The chain is Kinectin (KTN1) from Homo sapiens (Human).